The sequence spans 242 residues: Histone-lysine N-methyltransferase set-1 (242 aa).

The disordered stretch occupies residues 1–61; it reads MKVAAKKLAT…TRSRKGVSVK (61 aa). Positions 30–43 are enriched in low complexity; that stretch reads SENPSSLASHSSSS. In terms of domain architecture, SET spans 104-226; that stretch reads RLLEVYKDVV…QGEELLYDYG (123 aa). S-adenosyl-L-methionine-binding positions include 114–116, Tyr-159, and 186–187; these read KGR and NH.

This sequence belongs to the class V-like SAM-binding methyltransferase superfamily. Histone-lysine methyltransferase family. PR/SET subfamily. As to expression, in embryos, it is expressed ubiquitously. In late embryos, it is expressed in hypodermal seam cells. In L3 and L4 larvae and thereafter, it is expressed in vulval precursor cells. In adult males, it is also expressed in 6 unidentified posterior cells.

The protein resides in the nucleus. It is found in the chromosome. The catalysed reaction is L-lysyl(20)-[histone H4] + S-adenosyl-L-methionine = N(6)-methyl-L-lysyl(20)-[histone H4] + S-adenosyl-L-homocysteine + H(+). Functionally, histone methyltransferase that specifically monomethylates 'Lys-20' of histone H4 (H4K20me1). H4K20me1 is enriched on hermaphrodite X chromosomes and during mitosis. Involved in dosage compensation by repression of X-linked gene expression in hermaphrodites. Plays a role in growth and body fat regulation downstream of the TOR complex 2 pathway. The sequence is that of Histone-lysine N-methyltransferase set-1 (set-1) from Caenorhabditis elegans.